The chain runs to 434 residues: Tol-Pal system protein TolB (434 aa).

The signal sequence occupies residues 1 to 21 (MIVRRALALAALALAASPALA). The disordered stretch occupies residues 411–434 (GDRQTPVTSGKTDLAAPAWGPLAP).

The protein belongs to the TolB family. As to quaternary structure, the Tol-Pal system is composed of five core proteins: the inner membrane proteins TolA, TolQ and TolR, the periplasmic protein TolB and the outer membrane protein Pal. They form a network linking the inner and outer membranes and the peptidoglycan layer.

It is found in the periplasm. Part of the Tol-Pal system, which plays a role in outer membrane invagination during cell division and is important for maintaining outer membrane integrity. In Anaeromyxobacter sp. (strain K), this protein is Tol-Pal system protein TolB.